Here is a 170-residue protein sequence, read N- to C-terminus: Brassinosteroid-responsive RING protein 1 (170 aa).

Residues 15 to 37 (LFVQTLSILGFIRTIVFSIFRFL) traverse the membrane as a helical segment. The segment at 94–137 (CAVCLYEFEGEQEIRWLRNCRHIFHRSCLDRWMDHDQKTCPLCR) adopts an RING-type; atypical zinc-finger fold.

The protein belongs to the RING-type zinc finger family. Highly expressed in stems, rosette leaves and siliques, and moderately expressed in roots, cauline leaves and flower. Detected at low levels in seeds.

Its subcellular location is the membrane. In terms of biological role, may be involved in the brassinosteroids (BRs) signaling pathway and regulate the growth and development of rosette leaves. Seems to prevent over development of leaves and inflorescence stems. This is Brassinosteroid-responsive RING protein 1 from Arabidopsis thaliana (Mouse-ear cress).